A 208-amino-acid polypeptide reads, in one-letter code: Probable splicing factor, arginine/serine-rich 5 (208 aa).

One can recognise an RRM domain in the interval 2-74 (PRLYLGKIPY…MRLVVEMARG (73 aa)). A disordered region spans residues 71 to 208 (MARGKPRGND…RSPSPGSPKD (138 aa)). Residues 84-123 (SRSPRRRSRSPRRRSRTPPRRRSRSRDRKRSRRSRSRSSS) show a composition bias toward basic residues. The span at 128–153 (PVRESRRRSESRSPSPKRDLKREASR) shows a compositional bias: basic and acidic residues.

This sequence belongs to the splicing factor SR family. In terms of processing, extensively phosphorylated on serine residues in the RS domain.

It localises to the nucleus. Plays a functionally redundant role in shifting germ cell sexual differentiation in hermaphrodites. The protein is Probable splicing factor, arginine/serine-rich 5 (rsp-5) of Caenorhabditis elegans.